A 140-amino-acid chain; its full sequence is Holo-[acyl-carrier-protein] synthase (140 aa).

The Mg(2+) site is built by D8 and E57.

Belongs to the P-Pant transferase superfamily. AcpS family. The cofactor is Mg(2+).

The protein resides in the cytoplasm. It catalyses the reaction apo-[ACP] + CoA = holo-[ACP] + adenosine 3',5'-bisphosphate + H(+). Its function is as follows. Transfers the 4'-phosphopantetheine moiety from coenzyme A to a Ser of acyl-carrier-protein. This Beijerinckia indica subsp. indica (strain ATCC 9039 / DSM 1715 / NCIMB 8712) protein is Holo-[acyl-carrier-protein] synthase.